The following is a 1616-amino-acid chain: DNA (cytosine-5)-methyltransferase 1 (1616 aa).

An interaction with DMAP1 region spans residues 1 to 120; sequence MPARTAPARV…NQARSEARRV (120 aa). The tract at residues 1 to 148 is interaction with DNMT3A; sequence MPARTAPARV…RRSKSDGEAK (148 aa). Interaction with the PRC2/EED-EZH2 complex regions lie at residues 1–336 and 308–606; these read MPAR…TEKK and NPQI…TIRH. The DMAP1-binding domain maps to 16–109; the sequence is PAISLPDDVR…NREVNGRLEN (94 aa). Lysine 70 carries the N6,N6-dimethyllysine modification. The disordered stretch occupies residues 103 to 349; it reads VNGRLENGNQ…AKTVMNSKTH (247 aa). Phosphoserine occurs at positions 127 and 133. Threonine 137 carries the phosphothreonine modification. Serine 141 bears the Phosphoserine mark. The residue at position 142 (lysine 142) is an N6-methyllysine; by SETD7. A Phosphoserine; by PKB/AKT1 modification is found at serine 143. The segment at 149–217 is interaction with DNMT3B; the sequence is PEPSPSPRIT…TSRERVARPL (69 aa). Serine 152 and serine 154 each carry phosphoserine. Residue lysine 160 is modified to N6-acetyllysine. Residues 163-174 are interaction with PCNA; that stretch reads RQTTITSHFAKG. Phosphothreonine is present on threonine 166. Residues lysine 173 and lysine 188 each carry the N6-acetyllysine modification. The Nuclear localization signal signature appears at 177-205; the sequence is KRKPQEESERAKSDESIKEEDKDQDEKRR. 3 stretches are compositionally biased toward basic and acidic residues: residues 179–214, 221–267, and 281–306; these read KPQE…ERVA, EPER…REAR, and KDEK…EPEK. Lysine 259 carries the N6-acetyllysine; alternate modification. Lysine 259 participates in a covalent cross-link: Glycyl lysine isopeptide (Lys-Gly) (interchain with G-Cter in SUMO2); alternate. The tract at residues 310 to 502 is homodimerization; that stretch reads QISDEKDEDE…PEYAPIFGLM (193 aa). Position 312 is a phosphoserine (serine 312). Basic and acidic residues predominate over residues 321–337; sequence EEKRRKTTPKEPTEKKM. The interval 331 to 550 is DNA replication foci-targeting sequence; the sequence is EPTEKKMARA…NLNRFTEDSL (220 aa). Positions 353 and 356 each coordinate Zn(2+). At lysine 366 the chain carries N6-acetyllysine. Phosphoserine is present on residues serine 394 and serine 398. Zn(2+) is bound by residues cysteine 414 and histidine 418. Phosphoserine occurs at positions 509 and 549. The CXXC-type zinc finger occupies 646–692; that stretch reads NAFKRRRCGVCEVCQQPECGKCKACKDMVKFGGSGRSKQACQERRCP. Positions 651-697 are required for activity; that stretch reads RRCGVCEVCQQPECGKCKACKDMVKFGGSGRSKQACQERRCPNMAMK. The Zn(2+) site is built by cysteine 653, cysteine 656, cysteine 659, cysteine 664, cysteine 667, cysteine 670, cysteine 686, and cysteine 691. Positions 693–754 are autoinhibitory linker; it reads NMAMKEADDD…SYYKKVCIDA (62 aa). The span at 699-709 shows a compositional bias: acidic residues; it reads ADDDEEVDDNI. The interval 699 to 729 is disordered; sequence ADDDEEVDDNIPEMPSPKKMHQGKKKKQNKN. Serine 714 is modified (phosphoserine). Residues 716–728 show a composition bias toward basic residues; that stretch reads KKMHQGKKKKQNK. Serine 732 carries the phosphoserine modification. Residue lysine 749 is modified to N6-acetyllysine. The 126-residue stretch at 755–880 folds into the BAH 1 domain; that stretch reads ETLEVGDCVS…QDYARFESPP (126 aa). Serine 878 bears the Phosphoserine mark. Lysine 891, lysine 957, lysine 961, lysine 975, and lysine 1054 each carry N6-acetyllysine. A BAH 2 domain is found at 972 to 1100; that stretch reads HYRKYSDYIK…AKSKSFEDPP (129 aa). The tract at residues 1095-1130 is disordered; the sequence is SFEDPPNHARSPGNKGKGKGKGKGKPKSQACEPSEP. 5 consecutive repeat copies span residues 1109–1110, 1111–1112, 1113–1114, 1115–1116, and 1117–1118. A 6 X 2 AA tandem repeats of K-G region spans residues 1109 to 1120; that stretch reads KGKGKGKGKGKP. The span at 1110–1120 shows a compositional bias: basic residues; the sequence is GKGKGKGKGKP. Residues lysine 1111, lysine 1113, and lysine 1115 each carry the N6-acetyllysine modification. The residue at position 1117 (lysine 1117) is an N6-acetyllysine; by EHMT2. Residues lysine 1119 and lysine 1121 each carry the N6-acetyllysine modification. One copy of the 6; approximate repeat lies at 1119-1120; that stretch reads KP. Residues 1121–1616 are interaction with the PRC2/EED-EZH2 complex; it reads KSQACEPSEP…KIKEEEAAKD (496 aa). Residues 1139–1599 form the SAM-dependent MTase C5-type domain; sequence LRTLDVFSGC…LEIKLCMLAK (461 aa). The interval 1139-1616 is catalytic; it reads LRTLDVFSGC…KIKEEEAAKD (478 aa). S-adenosyl-L-methionine is bound by residues serine 1146, 1150-1151, 1168-1169, 1190-1191, and cysteine 1191; these read GL, EM, and DC. The active site involves cysteine 1226. An N6-acetyllysine mark is found at lysine 1349 and lysine 1415. The S-adenosyl-L-methionine site is built by asparagine 1578 and valine 1580. Lysine 1609 is covalently cross-linked (Glycyl lysine isopeptide (Lys-Gly) (interchain with G-Cter in SUMO2)).

Belongs to the class I-like SAM-binding methyltransferase superfamily. C5-methyltransferase family. In terms of assembly, homodimer. Forms a stable complex with E2F1, BB1 and HDAC1. Forms a complex with DMAP1 and HDAC2, with direct interaction. Interacts with the PRC2/EED-EZH2 complex. Probably part of a corepressor complex containing ZNF304, TRIM28, SETDB1 and DNMT1. Interacts with UHRF1; promoting its recruitment to hemimethylated DNA. Interacts with USP7, promoting its deubiquitination. Interacts with PCNA. Interacts with MBD2 and MBD3. Interacts with DNMT3A and DNMT3B. Interacts with UBC9. Interacts with CSNK1D. Interacts with HDAC1. Interacts with BAZ2A/TIP5. Interacts with SIRT7. Interacts with ZNF263; recruited to the SIX3 promoter along with other proteins involved in chromatin modification and transcriptional corepression where it contributes to transcriptional repression. Interacts with L3MBTL3 and DCAF5; the interaction requires DNMT1 methylation at Lys-142 and is necessary to target DNMT1 for ubiquitination by the CRL4-DCAF5 E3 ubiquitin ligase complex and proteasomal degradation. Interacts with PHF20L1; the interaction requires DNMT1 methylation at Lys-142 and protects DNMT1 from ubiquitination and proteasomal degradation. In terms of processing, sumoylated; sumoylation increases activity. Post-translationally, acetylation on multiple lysines, mainly by KAT2B/PCAF, regulates cell cycle G(2)/M transition. Deacetylation of Lys-1349 and Lys-1415 by SIRT1 increases methyltransferase activity. Phosphorylation of Ser-154 by CDKs is important for enzymatic activity and protein stability. Phosphorylation of Ser-143 by AKT1 prevents methylation by SETD7 thereby increasing DNMT1 stability. In terms of processing, methylation at Lys-142 by SETD7 is necessary for the regulation of DNMT1 proteasomal degradation. Post-translationally, ubiquitinated by UHRF1; interaction with USP7 counteracts ubiquitination by UHRF1 by promoting deubiquitination and preventing degradation by the proteasome. In terms of tissue distribution, ubiquitous; highly expressed in fetal tissues, heart, kidney, placenta, peripheral blood mononuclear cells, and expressed at lower levels in spleen, lung, brain, small intestine, colon, liver, and skeletal muscle. Isoform 2 is less expressed than isoform 1.

It is found in the nucleus. The catalysed reaction is a 2'-deoxycytidine in DNA + S-adenosyl-L-methionine = a 5-methyl-2'-deoxycytidine in DNA + S-adenosyl-L-homocysteine + H(+). Functionally, methylates CpG residues. Preferentially methylates hemimethylated DNA. Associates with DNA replication sites in S phase maintaining the methylation pattern in the newly synthesized strand, that is essential for epigenetic inheritance. Associates with chromatin during G2 and M phases to maintain DNA methylation independently of replication. It is responsible for maintaining methylation patterns established in development. DNA methylation is coordinated with methylation of histones. Mediates transcriptional repression by direct binding to HDAC2. In association with DNMT3B and via the recruitment of CTCFL/BORIS, involved in activation of BAG1 gene expression by modulating dimethylation of promoter histone H3 at H3K4 and H3K9. Probably forms a corepressor complex required for activated KRAS-mediated promoter hypermethylation and transcriptional silencing of tumor suppressor genes (TSGs) or other tumor-related genes in colorectal cancer (CRC) cells. Also required to maintain a transcriptionally repressive state of genes in undifferentiated embryonic stem cells (ESCs). Associates at promoter regions of tumor suppressor genes (TSGs) leading to their gene silencing. Promotes tumor growth. The sequence is that of DNA (cytosine-5)-methyltransferase 1 (DNMT1) from Homo sapiens (Human).